Reading from the N-terminus, the 84-residue chain is Toxin Tb1 (84 aa).

Residues 1–20 form the signal peptide; that stretch reads MKGMILFISCLLLIGIVVEC. In terms of domain architecture, LCN-type CS-alpha/beta spans 21-82; that stretch reads KEGYLMDHEG…VWDRATNKCG (62 aa). Cystine bridges form between Cys-31–Cys-81, Cys-35–Cys-57, Cys-43–Cys-62, and Cys-47–Cys-64. Cys-81 is subject to Cysteine amide.

It belongs to the long (4 C-C) scorpion toxin superfamily. Sodium channel inhibitor family. Beta subfamily. Expressed by the venom gland.

Its subcellular location is the secreted. Beta toxins bind voltage-independently at site-4 of sodium channels (Nav) and shift the voltage of activation toward more negative potentials thereby affecting sodium channel activation and promoting spontaneous and repetitive firing. Is lethal to mice. The sequence is that of Toxin Tb1 from Tityus bahiensis (Brazilian scorpion).